Reading from the N-terminus, the 515-residue chain is Histidine ammonia-lyase (515 aa).

The segment at residues 148–150 (ASG) is a cross-link (5-imidazolinone (Ala-Gly)). A 2,3-didehydroalanine (Ser) modification is found at Ser-149.

The protein belongs to the PAL/histidase family. Contains an active site 4-methylidene-imidazol-5-one (MIO), which is formed autocatalytically by cyclization and dehydration of residues Ala-Ser-Gly.

It localises to the cytoplasm. The enzyme catalyses L-histidine = trans-urocanate + NH4(+). It functions in the pathway amino-acid degradation; L-histidine degradation into L-glutamate; N-formimidoyl-L-glutamate from L-histidine: step 1/3. This chain is Histidine ammonia-lyase, found in Pseudomonas syringae pv. tomato (strain ATCC BAA-871 / DC3000).